Reading from the N-terminus, the 445-residue chain is Phosphoglucosamine mutase (445 aa).

Ser102 serves as the catalytic Phosphoserine intermediate. Residues Ser102, Asp241, Asp243, and Asp245 each contribute to the Mg(2+) site. Phosphoserine is present on Ser102.

This sequence belongs to the phosphohexose mutase family. It depends on Mg(2+) as a cofactor. In terms of processing, activated by phosphorylation.

The catalysed reaction is alpha-D-glucosamine 1-phosphate = D-glucosamine 6-phosphate. Functionally, catalyzes the conversion of glucosamine-6-phosphate to glucosamine-1-phosphate. The protein is Phosphoglucosamine mutase of Cronobacter sakazakii (strain ATCC BAA-894) (Enterobacter sakazakii).